The sequence spans 487 residues: Protein SMG9 (487 aa).

Disordered regions lie at residues 30–83 (EDAA…PPAL) and 136–164 (RDKG…LQPP). Over residues 42–70 (LKKDRDREQETWDRERDKDRKLERDREAE) the composition is skewed to basic and acidic residues.

Belongs to the SMG9 family.

Involved in nonsense-mediated decay (NMD) of mRNAs containing premature stop codons. Probable component of kinase complex containing nonC and recruited to stalled ribosomes. The sequence is that of Protein SMG9 from Drosophila melanogaster (Fruit fly).